The sequence spans 214 residues: MADS-box protein SOC1 (214 aa).

The MADS-box domain maps to 3-57 (RGKTQMKRIENATSRQVTFSKRRNGLLKKAFELSVLCDAEVSLIIFSPKGKLYEF). Positions 87-177 (MQHLKYEAAN…SEKWGSHESE (91 aa)) constitute a K-box domain. Positions 162-177 (AENEKLSEKWGSHESE) are enriched in basic and acidic residues. The segment at 162-214 (AENEKLSEKWGSHESEVWSNKNQESTGRGDEESSPSSEVETQLFIGLPCSSRK) is disordered. Residues 178-187 (VWSNKNQEST) are compositionally biased toward polar residues.

In terms of assembly, forms a heterodimer with AGL24 through MADS-box domain. Interacts with AGL15, AGL16 and AGL19. Interacts with OXS3 in the nucleus. In terms of tissue distribution, widely expressed. Not found in the apical meristem of short-day grown plants in vegetative stage.

Its subcellular location is the nucleus. It localises to the cytoplasm. In terms of biological role, transcription activator active in flowering time control. May integrate signals from the photoperiod, vernalization and autonomous floral induction pathways. Can modulate class B and C homeotic genes expression. When associated with AGL24, mediates effect of gibberellins on flowering under short-day conditions, and regulates the expression of LEAFY (LFY), which links floral induction and floral development. This chain is MADS-box protein SOC1, found in Arabidopsis thaliana (Mouse-ear cress).